Reading from the N-terminus, the 503-residue chain is MTFAEDKTYKYIRDNHSKFCCVDVLEILPYLSCLTASDQDRLRASYRQIGNRDTLWGLFNNLQRRPGWVEVFIRALQICELPGLADQVTRVYQSYLPPGTSLRSLEPLQLPDFPAAVSGPSAFAPGHNIPDHGLRETPSCPKPVQDTQPPESPVENSEQLLQTNSGAVARMSGGSLIPSPNQQALSPQPSREHQEQEPELGGAHAANVASVPIATYGPVSPTVSFQPLPRTALRTNLLSGVTVSALSADTSLSSSSTGSAFAKGAGDQAKAATCFSTTLTNSVTTSSVPSPRLVPVKTMSSKLPLSSKSTAAMTSTVLTNTAPSKLPSNSVYAGTVPSRVPASVAKAPANTIPPERNSKQAKETPEGPATKVTTGGNQTGPNSSIRSLHSGPEMSKPGVLVSQLDEPFSACSVDLAISPSSSLVSEPNHGPEENEYSSFRIQVDESPSADLLGSPEPLATQQPQEEEEHCASSMPWAKWLGATSALLAVFLAVMLYRSRRLAQ.

Over 1-478 (MTFAEDKTYK…HCASSMPWAK (478 aa)) the chain is Cytoplasmic. Residues Lys7 and Lys10 each participate in a glycyl lysine isopeptide (Lys-Gly) (interchain with G-Cter in ubiquitin) cross-link. The 68-residue stretch at 10 to 77 (KYIRDNHSKF…WVEVFIRALQ (68 aa)) folds into the CARD domain. The tract at residues 10-77 (KYIRDNHSKF…WVEVFIRALQ (68 aa)) is required for interaction with NLRX1. A lipid anchor (S-palmitoyl cysteine) is attached at Cys79. Positions 119 to 202 (GPSAFAPGHN…HQEQEPELGG (84 aa)) are disordered. The interaction with TRAF2 stretch occupies residues 143-147 (PVQDT). Polar residues predominate over residues 145-166 (QDTQPPESPVENSEQLLQTNSG). 5 positions are modified to phosphoserine: Ser152, Ser157, Ser172, Ser186, and Ser220. The interaction with TRAF6 1 stretch occupies residues 153–158 (PVENSE). The span at 178-189 (PSPNQQALSPQP) shows a compositional bias: polar residues. Arg234 is subject to Asymmetric dimethylarginine. Phosphoserine occurs at positions 251 and 256. Lys302 participates in a covalent cross-link: Glycyl lysine isopeptide (Lys-Gly) (interchain with G-Cter in ubiquitin). Residues 337–503 (PSRVPASVAK…MLYRSRRLAQ (167 aa)) form an interaction with DHX33 region. A disordered region spans residues 346–398 (KAPANTIPPERNSKQAKETPEGPATKVTTGGNQTGPNSSIRSLHSGPEMSKPG). Positions 356–365 (RNSKQAKETP) are enriched in basic and acidic residues. Over residues 371-387 (KVTTGGNQTGPNSSIRS) the composition is skewed to polar residues. Position 384 is a phosphoserine (Ser384). The pLxIS motif motif lies at 415 to 418 (LAIS). Ser418 carries the phosphoserine; by TBK1 modification. The interaction with TRAF6 2 stretch occupies residues 431-436 (PEENEY). Positions 446–466 (SPSADLLGSPEPLATQQPQEE) are disordered. A helical membrane pass occupies residues 479 to 496 (WLGATSALLAVFLAVMLY). Topologically, residues 497–503 (RSRRLAQ) are mitochondrial intermembrane.

As to quaternary structure, self-associates and polymerizes (via CARD domains) to form 400 nM long three-stranded helical filaments on mitochondria, filament nucleation requires interaction with RIGI whose CARD domains act as a template for filament assembly. Interacts with RIGI, IFIH1/MDA5, TRAF2, TRAF6 and C1QBP. May interact with FADD, RIPK1, IKBKE, CHUK and IKBKB. Interacts (when phosphorylated) with IRF3; following activation and phosphorylation on the pLxIS motif by TBK1, recruits IRF3. Interacts with NLRX1. Interaction with NLRX1 requires the CARD domain. Interacts with PSMA7. Interacts with TRAFD1. Interacts (via C-terminus) with PCBP2 in a complex containing MAVS/IPS1, PCBP2 and ITCH. Interacts with CYLD. Interacts with SRC. Interacts with DHX58/LGP2 and IKBKE. Interacts with STING1. Interacts with IFIT3 (via N-terminus). Interacts with TBK1 only in the presence of IFIT3. Interacts with TTLL12; the interaction prevents MAVS binding to TBK1 and IKBKE. Interacts with MUL1. Interacts with ANKRD17. Interacts with NDFIP1. Interacts with SMURF1; the interaction is mediated by NDFIP1 and leads to MAVS ubiquitination and degradation. Interacts (via C-terminus) with GPATCH3; the interaction is markedly increased upon viral infection. Directly interacts (via CARD domain) with ATG5 and ATG12, either as ATG5 and ATG12 monomers or as ATG12-ATG5 conjugates. Interacts with DHX33 (via the helicase C-terminal domain). Interacts with DDX3X (via C-terminus); this interaction may occur rapidly, but transiently after viral infection. The interaction with DDX3X potentiates MAVS-mediated IFNB induction. Conversely inhibition of this interaction prevents MAVS-mediated IFNB induction. Transiently interacts with TRAF3 early during viral infection. Interacts with CLPB. Interacts with TRAF3IP3. Interacts with TOMM70; the interaction is enhanced by virus infection. Interacts with ZNFX1. Interacts with DHX15. Interacts with N4BP3; this interaction promotes the polyubiquitination of MAVS. Interacts with TAX1BP1; this interaction induces MAVS polyubiquitination. Interacts with NLRP3; promoting NLRP3 recruitment to mitochondria and activation of the NLRP3 inflammasome. Interacts with ECSIT; this interaction bridges RIGI to the MAVS complex at the mitochondrion. Interacts with UBL7; this interaction promotes MAVS 'Lys-27'-linked ubiquitination leading to type I interferon production. Interacts (via transmembrane domain) with SMIM30/MAVI1 (via transmembrane domain); the interaction disrupts MAVS interaction with RIGI and inhibits MAVS aggregation, resulting in the repression of type I interferon signaling and innate immune responses. Following activation, phosphorylated by TBK1 at Ser-418 in the pLxIS motif. The phosphorylated pLxIS motif constitutes an IRF3-binding motif, leading to recruitment of the transcription factor IRF3 to induce type-I interferons and other cytokines. In terms of processing, ubiquitinated. Undergoes 'Lys-48'-linked polyubiquitination catalyzed by ITCH; ITCH-dependent polyubiquitination is mediated by the interaction with PCBP2 and leads to MAVS/IPS1 proteasomal degradation. Ubiquitinated by RNF125, leading to its degradation by the proteasome. Undergoes 'Lys-48'-linked ubiquitination catalyzed by SMURF1. Undergoes 'Lys-48'-linked ubiquitination catalyzed by MARCHF5 at Lys-7, leading to proteasomal degradation. Ubiquitinated via 'Lys-63'-linked ubiquitination at Lys-10 by TRIM31, promoting MAVS polymerization and formation of three-stranded helical filaments on mitochondria. Undergoes 'Lys-63'-linked ubiquitination leading to enhanced interaction between MAVS and TRAF2. Undergoes 'Lys-27'-linked ubiquitination by UBE2N and TRIM21 leading to enhanced interaction between MAVS and TBK1. Deubiquitinated by USP10 leading to attenuation of RIGI-mediated MAVS aggregation and production of type I interferon. Undergoes 'Lys-48'-linked polyubiquitination catalyzed by RNF115 leading to its degradation. Post-translationally, proteolytically cleaved by apoptotic caspases during apoptosis, leading to its inactivation. Cleavage by CASP3 during virus-induced apoptosis inactivates it, preventing cytokine overproduction. Palmitoylated by ZHDDC4. Palmitoylation promotes MAVS stabilization and activation by inhibiting 'Lys-48'- but facilitating 'Lys-63'-linked ubiquitination.

The protein localises to the mitochondrion outer membrane. Its subcellular location is the mitochondrion. It localises to the peroxisome. Functionally, adapter required for innate immune defense against viruses. Acts downstream of DHX33, RIGI and IFIH1/MDA5, which detect intracellular dsRNA produced during viral replication, to coordinate pathways leading to the activation of NF-kappa-B, IRF3 and IRF7, and to the subsequent induction of antiviral cytokines such as IFN-beta and RANTES (CCL5). Peroxisomal and mitochondrial MAVS act sequentially to create an antiviral cellular state. Upon viral infection, peroxisomal MAVS induces the rapid interferon-independent expression of defense factors that provide short-term protection, whereas mitochondrial MAVS activates an interferon-dependent signaling pathway with delayed kinetics, which amplifies and stabilizes the antiviral response. May activate the same pathways following detection of extracellular dsRNA by TLR3. May protect cells from apoptosis. Involved in NLRP3 inflammasome activation by mediating NLRP3 recruitment to mitochondria. The chain is Mitochondrial antiviral-signaling protein from Mus musculus (Mouse).